The chain runs to 89 residues: UPF0367 protein CYA_1023 (89 aa).

The tract at residues 69-89 (TKSGGPGAPGTRPGFLAQLQG) is disordered.

The protein belongs to the UPF0367 family.

The chain is UPF0367 protein CYA_1023 from Synechococcus sp. (strain JA-3-3Ab) (Cyanobacteria bacterium Yellowstone A-Prime).